We begin with the raw amino-acid sequence, 190 residues long: MIDPDGYRPNVGIVLMRRDGQVFWGRRVRRDGWQFPQGGMHSDETPVEAMYRELNEEIGLLPEHVQLVGATPGWLRYRLPSQAVRCNRSQMCIGQKQVWFLLQLIGDESHVQLDQSENPEFDHWRWVSFWYPIEHVVMFKRGVYARALCQLASLAQQVVGLEVGTMPQYVQDICLLNVGYKHLPNWVSRY.

Residues 6–149 form the Nudix hydrolase domain; sequence GYRPNVGIVL…KRGVYARALC (144 aa). The Nudix box signature appears at 38–59; that stretch reads GGMHSDETPVEAMYRELNEEIG.

This sequence belongs to the Nudix hydrolase family. RppH subfamily. It depends on a divalent metal cation as a cofactor.

Functionally, accelerates the degradation of transcripts by removing pyrophosphate from the 5'-end of triphosphorylated RNA, leading to a more labile monophosphorylated state that can stimulate subsequent ribonuclease cleavage. This Xylella fastidiosa (strain M12) protein is RNA pyrophosphohydrolase.